A 146-amino-acid polypeptide reads, in one-letter code: Large ribosomal subunit protein uL15 (146 aa).

Positions 1–10 (MRLNQLSPSA) are enriched in polar residues. The tract at residues 1-54 (MRLNQLSPSAGSRPDAKRAGRGAGSGLGKTAGRGHKGQHSRSGGFHKVGFEGGQ) is disordered. Residues 21–31 (RGAGSGLGKTA) are compositionally biased toward gly residues.

It belongs to the universal ribosomal protein uL15 family. As to quaternary structure, part of the 50S ribosomal subunit.

Functionally, binds to the 23S rRNA. This is Large ribosomal subunit protein uL15 from Halorhodospira halophila (strain DSM 244 / SL1) (Ectothiorhodospira halophila (strain DSM 244 / SL1)).